We begin with the raw amino-acid sequence, 237 residues long: B3 domain-containing protein Os06g0194400 (237 aa).

Disordered stretches follow at residues 1-23 (MIEA…RQVE) and 38-82 (SAAV…LPEK). The segment at residues 139 to 230 (FVKPMLQSHV…KFKVYIIRAS (92 aa)) is a DNA-binding region (TF-B3).

It localises to the nucleus. The protein is B3 domain-containing protein Os06g0194400 of Oryza sativa subsp. japonica (Rice).